The primary structure comprises 240 residues: Enolase-phosphatase E1 (240 aa).

The protein belongs to the HAD-like hydrolase superfamily. MasA/MtnC family. In terms of assembly, monomer. Mg(2+) serves as cofactor.

It catalyses the reaction 5-methylsulfanyl-2,3-dioxopentyl phosphate + H2O = 1,2-dihydroxy-5-(methylsulfanyl)pent-1-en-3-one + phosphate. It functions in the pathway amino-acid biosynthesis; L-methionine biosynthesis via salvage pathway; L-methionine from S-methyl-5-thio-alpha-D-ribose 1-phosphate: step 3/6. It participates in amino-acid biosynthesis; L-methionine biosynthesis via salvage pathway; L-methionine from S-methyl-5-thio-alpha-D-ribose 1-phosphate: step 4/6. In terms of biological role, bifunctional enzyme that catalyzes the enolization of 2,3-diketo-5-methylthiopentyl-1-phosphate (DK-MTP-1-P) into the intermediate 2-hydroxy-3-keto-5-methylthiopentenyl-1-phosphate (HK-MTPenyl-1-P), which is then dephosphorylated to form the acireductone 1,2-dihydroxy-3-keto-5-methylthiopentene (DHK-MTPene). The polypeptide is Enolase-phosphatase E1 (Saccharopolyspora erythraea (strain ATCC 11635 / DSM 40517 / JCM 4748 / NBRC 13426 / NCIMB 8594 / NRRL 2338)).